We begin with the raw amino-acid sequence, 467 residues long: 2-succinylbenzoate--CoA ligase (467 aa).

Belongs to the ATP-dependent AMP-binding enzyme family. MenE subfamily.

It carries out the reaction 2-succinylbenzoate + ATP + CoA = 2-succinylbenzoyl-CoA + AMP + diphosphate. It participates in quinol/quinone metabolism; 1,4-dihydroxy-2-naphthoate biosynthesis; 1,4-dihydroxy-2-naphthoate from chorismate: step 5/7. It functions in the pathway quinol/quinone metabolism; menaquinone biosynthesis. Its function is as follows. Converts 2-succinylbenzoate (OSB) to 2-succinylbenzoyl-CoA (OSB-CoA). This is 2-succinylbenzoate--CoA ligase from Listeria monocytogenes serovar 1/2a (strain ATCC BAA-679 / EGD-e).